A 793-amino-acid chain; its full sequence is E3 UFM1-protein ligase 1 (793 aa).

N-acetylalanine is present on A2. The interval 2-200 is mediates interaction with DDRGK1; it reads ADAWEEIRRL…RGLFSAITRP (199 aa). The interval 2 to 212 is required for E3 UFM1-protein ligase activity; sequence ADAWEEIRRL…VNSLVSKYGF (211 aa). The interval 121–250 is involved in CDK5RAP3-binding; that stretch reads DQLSEEVNDK…KAVFVPDIYS (130 aa). Residues 200-400 form a mediates interaction with TRIP4 region; that stretch reads PTPVNSLVSK…NPVHLITEED (201 aa). The tract at residues 410–473 is disordered; it reads VNTSKKDKKD…SSHGGKKKPD (64 aa). R433 carries the omega-N-methylarginine modification. S458 and S462 each carry phosphoserine. The tract at residues 490–683 is mediates interaction with CDK5RAP3; that stretch reads IQDAPEEFIS…QLKVTEDPAL (194 aa). The residue at position 535 (T535) is a Phosphothreonine. A disordered region spans residues 742-765; that stretch reads NKKTGQGEDPSSDELDKEQHDVTN. 2 positions are modified to phosphoserine: S752 and S753.

It belongs to the UFL1 family. Catalytic component of the UFM1 ribosome E3 ligase (UREL) complex, composed of UFL1, DDRGK1 and CDK5RAP3. Interacts with E2-like enzyme UFC1. Interacts with RELA. Interacts with NBN; promoting recruitment to double-strand breaks following DNA damage. Interacts (when phosphorylated) with YWHAG/14-3-3-gamma; sequestering UFL1 and preventing its association with PDCD1/PD-1 substrate. Post-translationally, ubiquitinated, leading to its degradation by the proteasome. Interaction with CDK5RAP3 protects both proteins against ubiquitination and degradation via the proteasome. In terms of processing, phosphorylated at Ser-462 by ATM, enhancing protein ligase activity and promoting ATM activation in a positive feedback loop. Phosphorylation at Thr-535 by AMPK promotes its interaction with YWHAG/14-3-3-gamma, thereby preventing UFL1 association with PDCD1/PD-1 substrate. In terms of tissue distribution, ubiquitously expressed with higher expression in pancreatic islets and other secretory tissues. In the embryonic brain at 17 dpc, detected in Sox2-positive neural stem cells and in Slc1a3/GLAST-positive radial glia. In perinatal brain, highly expressed in Slc1a3-positive Bergmann glia of the cerebellum. Continues to be expressed in Bergmann glia of adult brain at 16 weeks. Expressed in adult heart. Highly expressed in the intestinal exocrine cells.

The protein resides in the endoplasmic reticulum membrane. It localises to the cytoplasm. It is found in the cytosol. The protein localises to the nucleus. Its subcellular location is the chromosome. E3 protein ligase that mediates ufmylation, the covalent attachment of the ubiquitin-like modifier UFM1 to lysine residues on target proteins, and which plays a key role in various processes, such as ribosome recycling, response to DNA damage, interferon response or reticulophagy (also called ER-phagy). Catalyzes ufmylation of many protein, such as CD274/PD-L1, CDK5RAP3, CYB5R3, DDRGK1, EIF6, histone H4, MRE11, P4HB, PDCD1/PD-1, TRIP4, RPN1, RPS20/uS10, RPL10/uL16, RPL26/uL24, SYVN1/HRD1 and TP53/p53. As part of the UREL complex, plays a key role in ribosome recycling by catalyzing mono-ufmylation of RPL26/uL24 subunit of the 60S ribosome. Ufmylation of RPL26/uL24 occurs on free 60S ribosomes following ribosome dissociation: it weakens the junction between post-termination 60S subunits and SEC61 translocons, promoting release and recycling of the large ribosomal subunit from the endoplasmic reticulum membrane. Ufmylation of RPL26/uL24 and subsequent 60S ribosome recycling either take place after normal termination of translation or after ribosome stalling during cotranslational translocation at the endoplasmic reticulum. Involved in reticulophagy in response to endoplasmic reticulum stress by mediating ufmylation of proteins such as CYB5R3 and RPN1, thereby promoting lysosomal degradation of ufmylated proteins. Ufmylation in response to endoplasmic reticulum stress is essential for processes such as hematopoiesis, blood vessel morphogenesis or inflammatory response. Mediates ufmylation of DDRGK1 and CDK5RAP3; the role of these modifications is however unclear: as both DDRGK1 and CDK5RAP3 act as substrate adapters for ufmylation, it is uncertain whether ufmylation of these proteins is a collateral effect or is required for ufmylation. Acts as a negative regulator of T-cell activation by mediating ufmylation and stabilization of PDCD1/PD-1. Also involved in the response to DNA damage: recruited to double-strand break sites following DNA damage and mediates monoufmylation of histone H4 and ufmylation of MRE11. Mediates ufmylation of TP53/p53, promoting its stability. Catalyzes ufmylation of TRIP4, thereby playing a role in nuclear receptor-mediated transcription. Required for hematopoietic stem cell function and hematopoiesis. The sequence is that of E3 UFM1-protein ligase 1 from Mus musculus (Mouse).